A 229-amino-acid polypeptide reads, in one-letter code: Movement and silencing protein TGBp1 (229 aa).

Residues 1–114 form the (+)RNA virus helicase ATP-binding domain; the sequence is MVEFTKRLLL…PAAQVPHFVK (114 aa). Positions 115 to 229 constitute a (+)RNA virus helicase C-terminal domain; the sequence is LFSHRCGLNS…MSFDAADTSA (115 aa).

The protein belongs to the Tymovirales TGBp1 protein family. In terms of assembly, homodimer and homooligomer. Interacts with capsid protein. Interacts with host AGO1; this interaction targets the host protein for degradation, thereby suppressing the antiviral RNA silencing.

It localises to the host cytoplasm. Its function is as follows. Transports viral genome to neighboring plant cells directly through plasmosdesmata, without any budding. The movement protein allows efficient cell to cell propagation, by bypassing the host cell wall barrier. Increases plasmodesma size exclusion limit. Acts as a suppressor of RNA-mediated gene silencing, also known as post-transcriptional gene silencing (PTGS), a mechanism of plant viral defense that limits the accumulation of viral RNAs. This is Movement and silencing protein TGBp1 from Strawberry mild yellow edge-associated virus (SMYEaV).